We begin with the raw amino-acid sequence, 304 residues long: uncharacterized protein (304 aa).

The signal sequence occupies residues Met-1 to Ala-15. Residues Asn-28–Ser-151 enclose the Thioredoxin domain.

This is an uncharacterized protein from Mycobacterium bovis (strain ATCC BAA-935 / AF2122/97).